We begin with the raw amino-acid sequence, 490 residues long: Phenylacetaldehyde synthase (490 aa).

Residues proline 92, histidine 193, and histidine 308 each coordinate L-phenylalanine. Residue lysine 309 is modified to N6-(pyridoxal phosphate)lysine. An L-phenylalanine-binding site is contributed by phenylalanine 338.

Belongs to the group II decarboxylase family. As to quaternary structure, homodimer. It depends on pyridoxal 5'-phosphate as a cofactor. Expressed in roots, rosette leaves, stems, cauline leaves and flowers.

It catalyses the reaction L-phenylalanine + O2 + H2O + H(+) = 2-phenylacetaldehyde + H2O2 + NH4(+) + CO2. It carries out the reaction L-dopa + O2 + H2O + H(+) = 3,4-dihydroxyphenylacetaldehyde + H2O2 + NH4(+) + CO2. In terms of biological role, bifunctional enzyme that catalyzes the decarboxylation of L-phenylalanine to 2-phenylethylamine, which is then oxidized to form 2-phenylacetaldehyde, a constituent of floral scent. 2-phenylacetaldehyde is a precursor of 2-phenylethanol, another constituent of floral scent. Catalyzes both the decarboxylation and deamination of L-dopa to 3,4-dihydroxylphenylacetaldehyde (DHPAA). This chain is Phenylacetaldehyde synthase, found in Arabidopsis thaliana (Mouse-ear cress).